A 156-amino-acid chain; its full sequence is Eosinophil cationic-type ribonuclease 3 (156 aa).

A signal peptide spans 1–25; it reads MGPKLLESRLCLLLLLRLVLMLASC. The Proton acceptor role is filled by His38. N-linked (GlcNAc...) asparagine glycosylation is present at Asn41. Intrachain disulfides connect Cys47–Cys106, Cys61–Cys119, Cys79–Cys134, and Cys86–Cys94. 62-66 is a substrate binding site; the sequence is KGLNT. N-linked (GlcNAc...) asparagine glycosylation is found at Asn89, Asn96, and Asn107. The active-site Proton donor is the His151.

This sequence belongs to the pancreatic ribonuclease family.

In Mus musculus (Mouse), this protein is Eosinophil cationic-type ribonuclease 3 (Ear3).